The following is a 103-amino-acid chain: Large ribosomal subunit protein bL21 (103 aa).

This sequence belongs to the bacterial ribosomal protein bL21 family. Part of the 50S ribosomal subunit. Contacts protein L20.

In terms of biological role, this protein binds to 23S rRNA in the presence of protein L20. The chain is Large ribosomal subunit protein bL21 from Wigglesworthia glossinidia brevipalpis.